We begin with the raw amino-acid sequence, 182 residues long: NAD(P)H-quinone oxidoreductase subunit I, chloroplastic (182 aa).

4Fe-4S ferredoxin-type domains lie at 55–84 (GRIHFEFDKCIACEVCVRVCPIDLPVVDWK) and 95–124 (LNYSIDFGICIFCGNCVEYCPTNCLSMTEE). Residues Cys64, Cys67, Cys70, Cys74, Cys104, Cys107, Cys110, and Cys114 each contribute to the [4Fe-4S] cluster site.

The protein belongs to the complex I 23 kDa subunit family. As to quaternary structure, NDH is composed of at least 16 different subunits, 5 of which are encoded in the nucleus. It depends on [4Fe-4S] cluster as a cofactor.

Its subcellular location is the plastid. The protein resides in the chloroplast thylakoid membrane. It catalyses the reaction a plastoquinone + NADH + (n+1) H(+)(in) = a plastoquinol + NAD(+) + n H(+)(out). The catalysed reaction is a plastoquinone + NADPH + (n+1) H(+)(in) = a plastoquinol + NADP(+) + n H(+)(out). Its function is as follows. NDH shuttles electrons from NAD(P)H:plastoquinone, via FMN and iron-sulfur (Fe-S) centers, to quinones in the photosynthetic chain and possibly in a chloroplast respiratory chain. The immediate electron acceptor for the enzyme in this species is believed to be plastoquinone. Couples the redox reaction to proton translocation, and thus conserves the redox energy in a proton gradient. This is NAD(P)H-quinone oxidoreductase subunit I, chloroplastic from Buxus microphylla (Littleleaf boxwood).